Reading from the N-terminus, the 135-residue chain is RxLR effector protein Avr10 (135 aa).

A signal peptide spans 1–19 (MRLSFIIFAISLLAGGSGA). Residues 34 to 43 (GTNQGASTGK) show a composition bias toward polar residues. Positions 34–64 (GTNQGASTGKRSLRYDNNAERAGEEDDEERA) are disordered. The short motif at 44-63 (RSLRYDNNAERAGEEDDEER) is the RxLR-dEER element. Positions 46–55 (LRYDNNAERA) are enriched in basic and acidic residues.

The protein belongs to the RxLR effector family.

The protein resides in the secreted. It is found in the host nucleus. The protein localises to the host cytoplasm. Functionally, secreted effector that acts as an elicitor of hypersensitive response (HR) specifically on plants carrying defense protein R10. Enhances P.infestans colonization of Nicotiana benthamiana leaves. This Phytophthora infestans (strain T30-4) (Potato late blight agent) protein is RxLR effector protein Avr10.